The following is a 417-amino-acid chain: Exodeoxyribonuclease 7 large subunit (417 aa).

This sequence belongs to the XseA family. As to quaternary structure, heterooligomer composed of large and small subunits.

It is found in the cytoplasm. It catalyses the reaction Exonucleolytic cleavage in either 5'- to 3'- or 3'- to 5'-direction to yield nucleoside 5'-phosphates.. Its function is as follows. Bidirectionally degrades single-stranded DNA into large acid-insoluble oligonucleotides, which are then degraded further into small acid-soluble oligonucleotides. In Corynebacterium glutamicum (strain ATCC 13032 / DSM 20300 / JCM 1318 / BCRC 11384 / CCUG 27702 / LMG 3730 / NBRC 12168 / NCIMB 10025 / NRRL B-2784 / 534), this protein is Exodeoxyribonuclease 7 large subunit.